Consider the following 361-residue polypeptide: [LysW]-lysine hydrolase (361 aa).

Residue histidine 67 participates in Zn(2+) binding. Aspartate 69 is an active-site residue. Aspartate 91 is a Zn(2+) binding site. Residue glutamate 124 is the Proton acceptor of the active site. Zn(2+) is bound by residues glutamate 125, glutamate 148, and histidine 326.

The protein belongs to the peptidase M20A family. LysK subfamily. In terms of assembly, homotetramer and homooctamer. It depends on Zn(2+) as a cofactor. The cofactor is Co(2+).

It is found in the cytoplasm. The catalysed reaction is [amino-group carrier protein]-C-terminal-gamma-(L-lysyl)-L-glutamate + H2O = [amino-group carrier protein]-C-terminal-L-glutamate + L-lysine. It functions in the pathway amino-acid biosynthesis; L-lysine biosynthesis via AAA pathway; L-lysine from L-alpha-aminoadipate (Thermus route): step 5/5. Catalyzes the release of L-lysine from [LysW]-gamma-L-lysine. In vitro, can deacetylate both N(2)-acetyl-L-lysine and N(2)-acetyl-L-ornithine. The polypeptide is [LysW]-lysine hydrolase (Thermus thermophilus (strain ATCC BAA-163 / DSM 7039 / HB27)).